The primary structure comprises 210 residues: Large ribosomal subunit protein bL25 (210 aa).

The tract at residues 186-210 is disordered; that stretch reads ISSASTEKEAESNQESTSTTPSSES. The span at 198–210 shows a compositional bias: low complexity; that stretch reads NQESTSTTPSSES.

It belongs to the bacterial ribosomal protein bL25 family. CTC subfamily. Part of the 50S ribosomal subunit; part of the 5S rRNA/L5/L18/L25 subcomplex. Contacts the 5S rRNA. Binds to the 5S rRNA independently of L5 and L18.

Its function is as follows. This is one of the proteins that binds to the 5S RNA in the ribosome where it forms part of the central protuberance. The sequence is that of Large ribosomal subunit protein bL25 from Ehrlichia chaffeensis (strain ATCC CRL-10679 / Arkansas).